Here is a 387-residue protein sequence, read N- to C-terminus: tRNA pseudouridine synthase B (387 aa).

Residue aspartate 43 is the Nucleophile of the active site.

Belongs to the pseudouridine synthase TruB family. Type 1 subfamily.

The catalysed reaction is uridine(55) in tRNA = pseudouridine(55) in tRNA. Functionally, responsible for synthesis of pseudouridine from uracil-55 in the psi GC loop of transfer RNAs. The protein is tRNA pseudouridine synthase B of Bifidobacterium longum subsp. infantis (strain ATCC 15697 / DSM 20088 / JCM 1222 / NCTC 11817 / S12).